A 460-amino-acid chain; its full sequence is Bifunctional protein GlmU (460 aa).

A pyrophosphorylase region spans residues 1–232 (MALNVVILAA…AIEVEGANNR (232 aa)). UDP-N-acetyl-alpha-D-glucosamine is bound by residues 8 to 11 (LAAG), Lys22, Gln73, 78 to 79 (GT), 100 to 102 (YGD), Gly137, Glu157, Asn172, and Asn230. A Mg(2+)-binding site is contributed by Asp102. Asn230 lines the Mg(2+) pocket. Residues 233 to 253 (VQLAQLERAYQAREAEKLMLA) are linker. The N-acetyltransferase stretch occupies residues 254–460 (GANLRDPSRI…GWQRPVKIKK (207 aa)). The UDP-N-acetyl-alpha-D-glucosamine site is built by Arg336 and Lys354. The active-site Proton acceptor is the His366. UDP-N-acetyl-alpha-D-glucosamine contacts are provided by Tyr369 and Asn380. Acetyl-CoA-binding positions include Ala383, 389–390 (NY), Ser408, Ala426, and Arg443.

In the N-terminal section; belongs to the N-acetylglucosamine-1-phosphate uridyltransferase family. The protein in the C-terminal section; belongs to the transferase hexapeptide repeat family. As to quaternary structure, homotrimer. Mg(2+) serves as cofactor.

It is found in the cytoplasm. It catalyses the reaction alpha-D-glucosamine 1-phosphate + acetyl-CoA = N-acetyl-alpha-D-glucosamine 1-phosphate + CoA + H(+). The enzyme catalyses N-acetyl-alpha-D-glucosamine 1-phosphate + UTP + H(+) = UDP-N-acetyl-alpha-D-glucosamine + diphosphate. It participates in nucleotide-sugar biosynthesis; UDP-N-acetyl-alpha-D-glucosamine biosynthesis; N-acetyl-alpha-D-glucosamine 1-phosphate from alpha-D-glucosamine 6-phosphate (route II): step 2/2. Its pathway is nucleotide-sugar biosynthesis; UDP-N-acetyl-alpha-D-glucosamine biosynthesis; UDP-N-acetyl-alpha-D-glucosamine from N-acetyl-alpha-D-glucosamine 1-phosphate: step 1/1. It functions in the pathway bacterial outer membrane biogenesis; LPS lipid A biosynthesis. Catalyzes the last two sequential reactions in the de novo biosynthetic pathway for UDP-N-acetylglucosamine (UDP-GlcNAc). The C-terminal domain catalyzes the transfer of acetyl group from acetyl coenzyme A to glucosamine-1-phosphate (GlcN-1-P) to produce N-acetylglucosamine-1-phosphate (GlcNAc-1-P), which is converted into UDP-GlcNAc by the transfer of uridine 5-monophosphate (from uridine 5-triphosphate), a reaction catalyzed by the N-terminal domain. The chain is Bifunctional protein GlmU from Shewanella baltica (strain OS185).